A 760-amino-acid chain; its full sequence is MIIKVFLRLLLLCAHIVCIDGKLEIRPVVSGVRIESDVDASGFLGYGDAGELLVEANTEVDLVIFGHGLENVEMVTFTDSVCVTSEFNVSESTFYIHKDMKIVFKYAFVAWPQPWRICLKSECHGLIQIDDDRTWIQAVQSTHETFMPVWAQCAILCLLFSISALCSGLTLGLMALTPQELSILMKSGSQREKKHAAAIYPIRCHGNRLLCTVIIMNVIVNTGITLLFDDLAEGLIAFVASTVGIVVFGEILPQSICVKYGLAVGANTIFITKFFMFLLFPITWPLGKILDKYAGVDIDVVNRSRMVEMLKMNMENDACDIDLSTLKIAIGAMELTKKSVRDVMTDIDDVFMLSEDQVLNAETMTKISDSGYTRIPVFEGNNRNKVKNLLYVSDLALIGKDNNITVKAVARFNKRRLRIVDESMPLTALMDEFKLGDYHLAMVAKATEVKKHHHGKFADGTVDSFILKSMKLVEATMMPQVENPEDHPVTLVGLITLEDITEELLQAEITDETDCYVTDDAQKKRRTNTSKKSAAELFCSEKKSERLSLHMLEMTEKWLLEKTPLFGNMNPKAFENLIQRNIREVLIVPPKNSTSPGTLNLFEAGVMSKRFLLILEGKATIRFNEKDLIFECGPWTCFGEAILEKMEMCISDRKEPSTGFFFLPDYNLTVSGPCRFLQISTSSLLHSLRITQFVKEIRTPKISITSDDDFGSPTRKASILDSSPNSRKRSSTSVMNSLALPTARLAAKIASVEELKPLME.

An N-terminal signal peptide occupies residues methionine 1–glycine 21. Residues lysine 22–cysteine 153 lie on the Extracellular side of the membrane. The N-linked (GlcNAc...) asparagine glycan is linked to asparagine 88. The 179-residue stretch at threonine 145–leucine 323 folds into the CNNM transmembrane domain. A helical transmembrane segment spans residues alanine 154–methionine 174. Residues alanine 175 to arginine 208 lie on the Cytoplasmic side of the membrane. A helical membrane pass occupies residues leucine 209–aspartate 229. Aspartate 230 is a topological domain (extracellular). A helical transmembrane segment spans residues leucine 231–isoleucine 251. The Cytoplasmic portion of the chain corresponds to leucine 252–glycine 261. Residues leucine 262–isoleucine 282 traverse the membrane as a helical segment. Residues threonine 283–glutamate 760 are Extracellular-facing. 2 N-linked (GlcNAc...) asparagine glycosylation sites follow: asparagine 302 and asparagine 403. 2 consecutive CBS domains span residues methionine 344–valine 406 and methionine 442–glutamate 512. N-linked (GlcNAc...) asparagine glycans are attached at residues asparagine 528, asparagine 592, and asparagine 667. Positions aspartate 708–valine 734 are disordered.

The protein belongs to the ACDP family.

The protein localises to the cell membrane. In terms of biological role, probable metal transporter. Probably acts redundantly with the other metal transport proteins cnnm-1, cnnm-3, cnnm-4 and cnnm-5 to regulate Mg(2+) homeostasis. This chain is Metal transporter cnnm-2, found in Caenorhabditis elegans.